Reading from the N-terminus, the 217-residue chain is Protein-L-isoaspartate O-methyltransferase 2 (217 aa).

S62 is a catalytic residue.

The protein belongs to the methyltransferase superfamily. L-isoaspartyl/D-aspartyl protein methyltransferase family.

It localises to the cytoplasm. It catalyses the reaction [protein]-L-isoaspartate + S-adenosyl-L-methionine = [protein]-L-isoaspartate alpha-methyl ester + S-adenosyl-L-homocysteine. In terms of biological role, catalyzes the methyl esterification of L-isoaspartyl residues in peptides and proteins that result from spontaneous decomposition of normal L-aspartyl and L-asparaginyl residues. It plays a role in the repair and/or degradation of damaged proteins. In Geotalea uraniireducens (strain Rf4) (Geobacter uraniireducens), this protein is Protein-L-isoaspartate O-methyltransferase 2.